Here is a 213-residue protein sequence, read N- to C-terminus: Lysozyme g-like protein 2 (213 aa).

Residues 1-19 (MVPSVVFWGLIALVGTAKG) form the signal peptide. 2 disulfide bridges follow: cysteine 40–cysteine 93 and cysteine 54–cysteine 62. Glutamate 106 is a catalytic residue.

Belongs to the glycosyl hydrolase 23 family.

The protein localises to the secreted. May act as a potent antibacterial protein that may play a role in the innate immunity. The polypeptide is Lysozyme g-like protein 2 (Lyg2) (Mus musculus (Mouse)).